Reading from the N-terminus, the 345-residue chain is Phosphoribosylformylglycinamidine cyclo-ligase (345 aa).

It belongs to the AIR synthase family.

It localises to the cytoplasm. The catalysed reaction is 2-formamido-N(1)-(5-O-phospho-beta-D-ribosyl)acetamidine + ATP = 5-amino-1-(5-phospho-beta-D-ribosyl)imidazole + ADP + phosphate + H(+). Its pathway is purine metabolism; IMP biosynthesis via de novo pathway; 5-amino-1-(5-phospho-D-ribosyl)imidazole from N(2)-formyl-N(1)-(5-phospho-D-ribosyl)glycinamide: step 2/2. The sequence is that of Phosphoribosylformylglycinamidine cyclo-ligase from Escherichia coli O45:K1 (strain S88 / ExPEC).